The chain runs to 318 residues: Thymidylate synthase (318 aa).

DUMP is bound by residues R25 and 180–181; that span reads RR. C200 acts as the Nucleophile in catalysis. Residues 220–223, N231, and 261–263 contribute to the dUMP site; these read RSGD and HIY. A (6R)-5,10-methylene-5,6,7,8-tetrahydrofolate-binding site is contributed by D223. A317 provides a ligand contact to (6R)-5,10-methylene-5,6,7,8-tetrahydrofolate.

Belongs to the thymidylate synthase family. Bacterial-type ThyA subfamily. In terms of assembly, homodimer.

It localises to the cytoplasm. It carries out the reaction dUMP + (6R)-5,10-methylene-5,6,7,8-tetrahydrofolate = 7,8-dihydrofolate + dTMP. It functions in the pathway pyrimidine metabolism; dTTP biosynthesis. Its function is as follows. Catalyzes the reductive methylation of 2'-deoxyuridine-5'-monophosphate (dUMP) to 2'-deoxythymidine-5'-monophosphate (dTMP) while utilizing 5,10-methylenetetrahydrofolate (mTHF) as the methyl donor and reductant in the reaction, yielding dihydrofolate (DHF) as a by-product. This enzymatic reaction provides an intracellular de novo source of dTMP, an essential precursor for DNA biosynthesis. This is Thymidylate synthase from Bacillus cereus (strain ZK / E33L).